We begin with the raw amino-acid sequence, 323 residues long: MPSNSIFGGAAQAAPPSEALPVICLAGPTGSGKTAAALAVAEALGGEVINADSRQVYADFPRITAQPSAEELACCPHHLYGFLPTAQKISAGRWAAQAQATARQILSRGKIPLLVGGTGLYFQTLLHGTAEIPPVDPALTAAFTARLEDVGSQAMHAELARVDPDYATRIHPNDRQRIVRALEVHAATGKPFTWWHKHAMSRPPCNGPLLVLDAPLPWLEPRLARRLDMMLESGAMDEAAAALKNCDDDDAPGWTGIGCAEALAFLRGRLGFDACRDLWLRNTRAYAKRQLTWFRARPEAVWLPPDNVDAVVKAAGVRLPAGV.

27-34 (GPTGSGKT) serves as a coordination point for ATP. 29–34 (TGSGKT) contributes to the substrate binding site. Interaction with substrate tRNA regions lie at residues 52 to 55 (DSRQ) and 176 to 180 (QRIVR).

This sequence belongs to the IPP transferase family. In terms of assembly, monomer. It depends on Mg(2+) as a cofactor.

The catalysed reaction is adenosine(37) in tRNA + dimethylallyl diphosphate = N(6)-dimethylallyladenosine(37) in tRNA + diphosphate. Catalyzes the transfer of a dimethylallyl group onto the adenine at position 37 in tRNAs that read codons beginning with uridine, leading to the formation of N6-(dimethylallyl)adenosine (i(6)A). The polypeptide is tRNA dimethylallyltransferase (Desulfovibrio desulfuricans (strain ATCC 27774 / DSM 6949 / MB)).